The following is a 430-amino-acid chain: MAARLLRGSLRVLGGHRAPRQLPAARCSHSGGEERLETPSAKKLTDIGIRRIFSPEHDIFRKSVRKFFQEEVIPHHSEWEKAGEVSREVWEKAGKQGLLGVNIAEHLGGIGGDLYSAAIVWEEQAYSNCSGPGFSIHSGIVMSYITNHGSEEQIKHFIPQMTAGKCIGAIAMTEPGAGSDLQGIKTNAKKDGSDWILNGSKVFISNGSLSDVVIVVAVTNHEAPSPAHGISLFLVENGMKGFIKGRKLHKMGLKAQDTAELFFEDIRLPASALLGEENKGFYYIMKELPQERLLIADVAISASEFMFEETRNYVKQRKAFGKTVAHLQTVQHKLAELKTHICVTRAFVDNCLQLHEAKRLDSATACMAKYWASELQNSVAYDCVQLHGGWGYMWEYPIAKAYVDARVQPIYGGTNEIMKELIAREIVFDK.

Residues 1–30 constitute a mitochondrion transit peptide; that stretch reads MAARLLRGSLRVLGGHRAPRQLPAARCSHS. Position 42 is an N6-acetyllysine (K42). Position 54 is a phosphoserine (S54). N6-acetyllysine; alternate is present on residues K66 and K81. K66 and K81 each carry N6-succinyllysine; alternate. N6-acetyllysine is present on residues K92 and K95. K165 is subject to N6-succinyllysine. FAD-binding positions include 170-179 and 203-205; these read IAMTEPGAGS and FIS. S179 serves as a coordination point for substrate. A substrate-binding site is contributed by 227-228; sequence AH. K240 is modified (N6-succinyllysine). An N6-acetyllysine; alternate mark is found at K254 and K279. An N6-succinyllysine; alternate mark is found at K254 and K279. Substrate is bound by residues Y282 and 289-292; that span reads PQER. E291 (proton acceptor) is an active-site residue. An FAD-binding site is contributed by R317. Residue K318 is modified to N6-acetyllysine. K322 is modified (N6-acetyllysine; alternate). At K322 the chain carries N6-succinyllysine; alternate. Q328 is an FAD binding site. K358 carries the post-translational modification N6-acetyllysine. S362 is subject to Phosphoserine. 385–389 serves as a coordination point for FAD; that stretch reads QLHGG. 412–413 is a binding site for substrate; the sequence is GG. 414–416 contacts FAD; the sequence is TNE.

It belongs to the acyl-CoA dehydrogenase family. Homotetramer. The cofactor is FAD. Acetylation at Lys-318 and Lys-322 in proximity of the cofactor-binding sites strongly reduces catalytic activity. These sites are deacetylated by SIRT3.

The protein localises to the mitochondrion matrix. It carries out the reaction a long-chain 2,3-saturated fatty acyl-CoA + oxidized [electron-transfer flavoprotein] + H(+) = a long-chain (2E)-enoyl-CoA + reduced [electron-transfer flavoprotein]. The enzyme catalyses hexanoyl-CoA + oxidized [electron-transfer flavoprotein] + H(+) = (2E)-hexenoyl-CoA + reduced [electron-transfer flavoprotein]. It catalyses the reaction octanoyl-CoA + oxidized [electron-transfer flavoprotein] + H(+) = (2E)-octenoyl-CoA + reduced [electron-transfer flavoprotein]. The catalysed reaction is decanoyl-CoA + oxidized [electron-transfer flavoprotein] + H(+) = (2E)-decenoyl-CoA + reduced [electron-transfer flavoprotein]. It carries out the reaction dodecanoyl-CoA + oxidized [electron-transfer flavoprotein] + H(+) = (2E)-dodecenoyl-CoA + reduced [electron-transfer flavoprotein]. The enzyme catalyses tetradecanoyl-CoA + oxidized [electron-transfer flavoprotein] + H(+) = (2E)-tetradecenoyl-CoA + reduced [electron-transfer flavoprotein]. It catalyses the reaction oxidized [electron-transfer flavoprotein] + hexadecanoyl-CoA + H(+) = (2E)-hexadecenoyl-CoA + reduced [electron-transfer flavoprotein]. The catalysed reaction is octadecanoyl-CoA + oxidized [electron-transfer flavoprotein] + H(+) = (2E)-octadecenoyl-CoA + reduced [electron-transfer flavoprotein]. It carries out the reaction eicosanoyl-CoA + oxidized [electron-transfer flavoprotein] + H(+) = (2E)-eicosenoyl-CoA + reduced [electron-transfer flavoprotein]. The enzyme catalyses docosanoyl-CoA + oxidized [electron-transfer flavoprotein] + H(+) = (2E)-docosenoyl-CoA + reduced [electron-transfer flavoprotein]. It catalyses the reaction tetracosanoyl-CoA + oxidized [electron-transfer flavoprotein] + H(+) = (2E)-tetracosenoyl-CoA + reduced [electron-transfer flavoprotein]. The catalysed reaction is (5E)-tetradecenoyl-CoA + oxidized [electron-transfer flavoprotein] + H(+) = (2E,5E)-tetradecadienoyl-CoA + reduced [electron-transfer flavoprotein]. It carries out the reaction (5Z)-tetradecenoyl-CoA + oxidized [electron-transfer flavoprotein] + H(+) = (2E,5Z)-tetradecadienoyl-CoA + reduced [electron-transfer flavoprotein]. The enzyme catalyses oxidized [electron-transfer flavoprotein] + (9Z)-octadecenoyl-CoA + H(+) = (2E,9Z)-octadecadienoyl-CoA + reduced [electron-transfer flavoprotein]. It participates in lipid metabolism; mitochondrial fatty acid beta-oxidation. Functionally, long-chain specific acyl-CoA dehydrogenase is one of the acyl-CoA dehydrogenases that catalyze the first step of mitochondrial fatty acid beta-oxidation, an aerobic process breaking down fatty acids into acetyl-CoA and allowing the production of energy from fats. The first step of fatty acid beta-oxidation consists in the removal of one hydrogen from C-2 and C-3 of the straight-chain fatty acyl-CoA thioester, resulting in the formation of trans-2-enoyl-CoA. Among the different mitochondrial acyl-CoA dehydrogenases, long-chain specific acyl-CoA dehydrogenase can act on saturated and unsaturated acyl-CoAs with 6 to 24 carbons with a preference for 8 to 18 carbons long primary chains. This chain is Long-chain specific acyl-CoA dehydrogenase, mitochondrial, found in Homo sapiens (Human).